We begin with the raw amino-acid sequence, 367 residues long: Glutamate 5-kinase 2 (367 aa).

Lys-10 provides a ligand contact to ATP. Residues Ser-50, Asp-136, and Asn-148 each coordinate substrate. Residues 168–169 (TD) and 210–216 (TGGMATK) contribute to the ATP site. The PUA domain occupies 275–353 (SGQIVIDAGA…KQIGELLDYD (79 aa)).

Belongs to the glutamate 5-kinase family.

The protein resides in the cytoplasm. The enzyme catalyses L-glutamate + ATP = L-glutamyl 5-phosphate + ADP. It functions in the pathway amino-acid biosynthesis; L-proline biosynthesis; L-glutamate 5-semialdehyde from L-glutamate: step 1/2. In terms of biological role, catalyzes the transfer of a phosphate group to glutamate to form L-glutamate 5-phosphate. This chain is Glutamate 5-kinase 2, found in Pseudoalteromonas translucida (strain TAC 125).